The chain runs to 256 residues: ATP synthase subunit a (256 aa).

Positions 1 to 8 (MYQFNFIL) are cleaved as a propeptide — removed in mature form. 7 helical membrane-spanning segments follow: residues 34–54 (ITNIGLYLSIGLLLTLGYHLL), 92–112 (YFPFIYALFIFILVNNLIGMV), 121–141 (HFILTFSMSFTIVLGATFLGL), 148–168 (FFSLFVPSGCPLGLLPLLVLI), 186–206 (ANILSGHMLLSILSGFTYNIM), 209–229 (GILFFFLGLIPLAFIIAFSGL), and 230–250 (ELAIAFIQAQVFVVLTCSYIK).

This sequence belongs to the ATPase A chain family. As to quaternary structure, F-type ATPases have 2 components, CF(1) - the catalytic core - and CF(0) - the membrane proton channel. CF(1) has five subunits: alpha(3), beta(3), gamma(1), delta(1), epsilon(1). CF(0) has three main subunits: a, b and c.

Its subcellular location is the mitochondrion inner membrane. Its function is as follows. Mitochondrial membrane ATP synthase (F(1)F(0) ATP synthase or Complex V) produces ATP from ADP in the presence of a proton gradient across the membrane which is generated by electron transport complexes of the respiratory chain. F-type ATPases consist of two structural domains, F(1) - containing the extramembraneous catalytic core and F(0) - containing the membrane proton channel, linked together by a central stalk and a peripheral stalk. During catalysis, ATP synthesis in the catalytic domain of F(1) is coupled via a rotary mechanism of the central stalk subunits to proton translocation. Key component of the proton channel; it may play a direct role in the translocation of protons across the membrane. In Emericella nidulans (Aspergillus nidulans), this protein is ATP synthase subunit a (atp6).